The sequence spans 207 residues: N-(5'-phosphoribosyl)anthranilate isomerase (207 aa).

It belongs to the TrpF family.

It catalyses the reaction N-(5-phospho-beta-D-ribosyl)anthranilate = 1-(2-carboxyphenylamino)-1-deoxy-D-ribulose 5-phosphate. Its pathway is amino-acid biosynthesis; L-tryptophan biosynthesis; L-tryptophan from chorismate: step 3/5. This is N-(5'-phosphoribosyl)anthranilate isomerase from Legionella pneumophila (strain Corby).